The following is a 261-amino-acid chain: Triosephosphate isomerase (261 aa).

Position 10 to 12 (asparagine 10 to lysine 12) interacts with substrate. Residue histidine 100 is the Electrophile of the active site. Catalysis depends on glutamate 172, which acts as the Proton acceptor. Residues glycine 178, serine 218, and glycine 239–glycine 240 each bind substrate.

This sequence belongs to the triosephosphate isomerase family. Homodimer.

Its subcellular location is the cytoplasm. The enzyme catalyses D-glyceraldehyde 3-phosphate = dihydroxyacetone phosphate. Its pathway is carbohydrate biosynthesis; gluconeogenesis. It participates in carbohydrate degradation; glycolysis; D-glyceraldehyde 3-phosphate from glycerone phosphate: step 1/1. Its function is as follows. Involved in the gluconeogenesis. Catalyzes stereospecifically the conversion of dihydroxyacetone phosphate (DHAP) to D-glyceraldehyde-3-phosphate (G3P). The protein is Triosephosphate isomerase of Mycobacterium marinum (strain ATCC BAA-535 / M).